Reading from the N-terminus, the 432-residue chain is Polyadenylate-binding protein RBP47C (432 aa).

Positions M1–P55 are disordered. Residues Q22 to Q32 show a composition bias toward pro residues. 2 RRM domains span residues K101–F183 and L197–P276. A disordered region spans residues I271 to T293. Polar residues predominate over residues R277–G286. The RRM 3 domain maps to T304 to N376.

This sequence belongs to the polyadenylate-binding RBP47 family. In terms of assembly, interacts with the poly(A) tail of mRNA in nucleus. Expressed in leaves, stems, flowers, and seedlings.

The protein resides in the nucleus. Its subcellular location is the cytoplasmic granule. Its function is as follows. Heterogeneous nuclear ribonucleoprotein (hnRNP)-protein binding the poly(A) tail of mRNA and probably involved in some steps of pre-mRNA maturation. This chain is Polyadenylate-binding protein RBP47C (RBP47C), found in Arabidopsis thaliana (Mouse-ear cress).